An 805-amino-acid polypeptide reads, in one-letter code: MNKLPKGWNFTIVDDNADSTNSENIQGKRPRRSRTSVQRSDGASPIIRDNIVLIRTDDNEEFKVGDTIEITQGKGPEDPTTEYGLITEIKFGNSEFIEVIVDWFIRSSEIVGMPNDFFADNELLLTPFRSEVKFIDFIRPINVLSESQFADVVIDESNSHSTFLVKRATDNEGNFSDIFDYKDFSGKVLENPKKCAIQVKELISTTVQKELLKEFSKEQRKKKANKVSTTGRVTRFNKRKESVSTKAIKPENKQVKIEIDNDVLSDQSEEKQEESDYNEAEDANSALESDEENISQESEDSEVEYSTKKKLKNKKLSRRSKAAATPSPKRKLQKKDIEDIYSVVTPTKRMKLGKDDRDSLPVFLSPTKSVPSEFTDPKSVAFKEVKQRLHTSQKLNALPGREDEFAMIYMNHESAVNEKTGCCVYVCGLPGMGKTATIKDVVEQMTYSSERGEMEQFSYLELNGLKLLSPTVAYEALWHHISGDKVSASNAALLLEEYFKREDHKRKPLVILMDEFDQIATKKQNVMYNFFNWPTYSTSKLIVIAVANTMDLPERMLTNKIASRLGLRRIQFRGYTFQQLGDIITHRLEMITKNNRRKVVITSDAIGFASRKVASVSGDARRALTICRRAVEIAEKEYLENKKGEDDSEPYQVLISHISTAINETVNSPLSKYIASLPFASKLVLASLLRRSRRTGLAENSLGDIIDEMRNSFAMATHSEEQGSDELNMQDVLYSDKTFTATNETVPILNLRIHFFKQIVTSLVEAGIIIQQNSPGETSRLVKLDVPEEEVVSVFKKDNAISQFL.

Residues 1–41 (MNKLPKGWNFTIVDDNADSTNSENIQGKRPRRSRTSVQRSD) form a disordered region. The 121-residue stretch at 60–180 (EEFKVGDTIE…NEGNFSDIFD (121 aa)) folds into the BAH domain. The segment at 223 to 334 (KANKVSTTGR…TPSPKRKLQK (112 aa)) is disordered. Residues 239 to 259 (RKESVSTKAIKPENKQVKIEI) show a composition bias toward basic and acidic residues. The span at 271–303 (KQEESDYNEAEDANSALESDEENISQESEDSEV) shows a compositional bias: acidic residues. A compositionally biased stretch (basic residues) spans 308 to 321 (KKKLKNKKLSRRSK). 428–436 (GLPGMGKTA) lines the ATP pocket. Residues aspartate 514 and glutamate 515 each coordinate Mg(2+). Positions 515, 548, and 621 each coordinate ATP.

This sequence belongs to the ORC1 family. As to quaternary structure, ORC is composed of six subunits.

The protein resides in the nucleus. Functionally, component of the origin recognition complex (ORC) that binds origins of replication. It has a role in both chromosomal replication and mating type transcriptional silencing. Binds to the ARS consensus sequence (ACS) of origins of replication in an ATP-dependent manner. This Candida albicans (Yeast) protein is Origin recognition complex subunit 1 (ORC1).